We begin with the raw amino-acid sequence, 105 residues long: Nitrogen fixation nifHD region GlnB-like protein 1 (105 aa).

This sequence belongs to the P(II) protein family.

In terms of biological role, could be involved in the regulation of nitrogen fixation. This is Nitrogen fixation nifHD region GlnB-like protein 1 (glnBA) from Methanothermobacter marburgensis (strain ATCC BAA-927 / DSM 2133 / JCM 14651 / NBRC 100331 / OCM 82 / Marburg) (Methanobacterium thermoautotrophicum).